The sequence spans 201 residues: MALKDRFDKIISYFDTDDVSENEVHEVQERTSVQRDSRAATAQEASQRSHMTNSAEEEMIGSRPRTSTYNPNRQERQRVQRDNSYQQATPRIQNKDSVRQQREQVTIALKYPRKYEDAQEIVDLLIVNECVLIDFQYMLDAQARRCLDYIDGASRVLYGSLQKVGSSMFLLTPANVMVDIEEMNIPKTGQETSFDFDMKRR.

Positions 27-38 (VQERTSVQRDSR) are enriched in basic and acidic residues. The segment at 27-99 (VQERTSVQRD…PRIQNKDSVR (73 aa)) is disordered. 2 stretches are compositionally biased toward polar residues: residues 43–54 (QEASQRSHMTNS) and 82–92 (DNSYQQATPRI).

The protein belongs to the SepF family. As to quaternary structure, homodimer. Interacts with FtsZ.

The protein resides in the cytoplasm. In terms of biological role, cell division protein that is part of the divisome complex and is recruited early to the Z-ring. Probably stimulates Z-ring formation, perhaps through the cross-linking of FtsZ protofilaments. Its function overlaps with FtsA. This is Cell division protein SepF from Streptococcus agalactiae serotype III (strain NEM316).